The following is a 514-amino-acid chain: Maturase K (514 aa).

The protein belongs to the intron maturase 2 family. MatK subfamily.

It localises to the plastid. It is found in the chloroplast. In terms of biological role, usually encoded in the trnK tRNA gene intron. Probably assists in splicing its own and other chloroplast group II introns. The sequence is that of Maturase K from Acer monspessulanum (Montpellier maple).